The primary structure comprises 353 residues: Putative actin-28 (353 aa).

The protein belongs to the actin family.

Its subcellular location is the cytoplasm. It localises to the cytoskeleton. The catalysed reaction is ATP + H2O = ADP + phosphate + H(+). Functionally, actins are highly conserved proteins that are involved in various types of cell motility and are ubiquitously expressed in all eukaryotic cells. Multiple isoforms are involved in various cellular functions such as cytoskeleton structure, cell mobility, chromosome movement and muscle contraction. This is Putative actin-28 (act28) from Dictyostelium discoideum (Social amoeba).